Consider the following 296-residue polypeptide: Small ribosomal subunit protein uS2 (296 aa).

Disordered stretches follow at residues 1–24 (MNTK…TQSQ) and 270–296 (HELK…EASQ).

The protein belongs to the universal ribosomal protein uS2 family.

The chain is Small ribosomal subunit protein uS2 from Mycoplasmopsis synoviae (strain 53) (Mycoplasma synoviae).